The sequence spans 694 residues: DNA-directed RNA polymerase subunit beta' (694 aa).

Residues Cys69, Cys71, Cys87, and Cys90 each contribute to the Zn(2+) site. The Mg(2+) site is built by Asp489, Asp491, and Asp493.

This sequence belongs to the RNA polymerase beta' chain family. RpoC1 subfamily. In terms of assembly, in plastids the minimal PEP RNA polymerase catalytic core is composed of four subunits: alpha, beta, beta', and beta''. When a (nuclear-encoded) sigma factor is associated with the core the holoenzyme is formed, which can initiate transcription. The cofactor is Mg(2+). Requires Zn(2+) as cofactor.

The protein localises to the plastid. It is found in the chloroplast. The catalysed reaction is RNA(n) + a ribonucleoside 5'-triphosphate = RNA(n+1) + diphosphate. DNA-dependent RNA polymerase catalyzes the transcription of DNA into RNA using the four ribonucleoside triphosphates as substrates. The chain is DNA-directed RNA polymerase subunit beta' from Adiantum capillus-veneris (Maidenhair fern).